The primary structure comprises 379 residues: Chaperone protein DnaJ (379 aa).

A J domain is found at 5–69 (EFYDRLGVSK…QKRAAYDQYG (65 aa)). A CR-type zinc finger spans residues 135 to 217 (GAEKEVSYNR…CHGTGHEKKT (83 aa)). Residues Cys148, Cys151, Cys165, Cys168, Cys191, Cys194, Cys205, and Cys208 each contribute to the Zn(2+) site. 4 CXXCXGXG motif repeats span residues 148-155 (CHTCSGSG), 165-172 (CQKCHGSG), 191-198 (CDVCQGSG), and 205-212 (CPTCHGTG).

The protein belongs to the DnaJ family. As to quaternary structure, homodimer. Requires Zn(2+) as cofactor.

It is found in the cytoplasm. Participates actively in the response to hyperosmotic and heat shock by preventing the aggregation of stress-denatured proteins and by disaggregating proteins, also in an autonomous, DnaK-independent fashion. Unfolded proteins bind initially to DnaJ; upon interaction with the DnaJ-bound protein, DnaK hydrolyzes its bound ATP, resulting in the formation of a stable complex. GrpE releases ADP from DnaK; ATP binding to DnaK triggers the release of the substrate protein, thus completing the reaction cycle. Several rounds of ATP-dependent interactions between DnaJ, DnaK and GrpE are required for fully efficient folding. Also involved, together with DnaK and GrpE, in the DNA replication of plasmids through activation of initiation proteins. This Streptococcus agalactiae serotype III (strain NEM316) protein is Chaperone protein DnaJ.